Here is a 255-residue protein sequence, read N- to C-terminus: tRNA (guanine-N(1)-)-methyltransferase (255 aa).

S-adenosyl-L-methionine is bound by residues G117 and 137–142; that span reads LGDFVL.

It belongs to the RNA methyltransferase TrmD family. Homodimer.

The protein resides in the cytoplasm. It catalyses the reaction guanosine(37) in tRNA + S-adenosyl-L-methionine = N(1)-methylguanosine(37) in tRNA + S-adenosyl-L-homocysteine + H(+). Functionally, specifically methylates guanosine-37 in various tRNAs. This Paraburkholderia phymatum (strain DSM 17167 / CIP 108236 / LMG 21445 / STM815) (Burkholderia phymatum) protein is tRNA (guanine-N(1)-)-methyltransferase.